The following is a 302-amino-acid chain: Plant UBX domain-containing protein 3 (302 aa).

2 disordered regions span residues 1–64 (MSSK…PKHD) and 79–98 (VEGPLEHPSSSRSFTGTGRL). The SEP domain maps to 113 to 177 (PVIHNIIFWS…NLMRRDEKCP (65 aa)). Residues 224–301 (ETLPSTSIQL…GLASSVVIQK (78 aa)) enclose the UBX domain.

In terms of assembly, interacts with CDC48A.

This is Plant UBX domain-containing protein 3 from Arabidopsis thaliana (Mouse-ear cress).